A 368-amino-acid polypeptide reads, in one-letter code: Biglycan (368 aa).

A signal peptide spans 1 to 16 (MKVLLLLCSCILVIHA). Residues 17 to 37 (LPFEQRGFWDFSMDDGMAMMK) constitute a propeptide that is removed on maturation. Intrachain disulfides connect Cys-63–Cys-69 and Cys-67–Cys-76. LRR repeat units follow at residues 82 to 102 (TSIP…NNKI), 103 to 126 (TEIK…NNKI), 127 to 150 (SKIN…KNNL), 151 to 171 (EEIP…ENKI), 172 to 195 (KKVP…GNPL), 196 to 220 (ENGG…EAKL), 221 to 241 (SGIP…NNKI), 242 to 265 (QAIE…HNNI), 266 to 289 (RMIE…NNKL), 290 to 312 (SKVP…SNNI), 313 to 342 (TQVG…NNPV), and 343 to 368 (PYWE…NYRK). Residues Asn-270 and Asn-311 are each glycosylated (N-linked (GlcNAc...) asparagine). Cys-321 and Cys-354 form a disulfide bridge.

It belongs to the small leucine-rich proteoglycan (SLRP) family. SLRP class I subfamily.

The protein localises to the secreted. It localises to the extracellular space. It is found in the extracellular matrix. Its function is as follows. May be involved in collagen fiber assembly. The protein is Biglycan (bgn) of Xenopus laevis (African clawed frog).